Consider the following 206-residue polypeptide: ATP phosphoribosyltransferase (206 aa).

The protein belongs to the ATP phosphoribosyltransferase family. Short subfamily. As to quaternary structure, heteromultimer composed of HisG and HisZ subunits.

The protein resides in the cytoplasm. It carries out the reaction 1-(5-phospho-beta-D-ribosyl)-ATP + diphosphate = 5-phospho-alpha-D-ribose 1-diphosphate + ATP. The protein operates within amino-acid biosynthesis; L-histidine biosynthesis; L-histidine from 5-phospho-alpha-D-ribose 1-diphosphate: step 1/9. Functionally, catalyzes the condensation of ATP and 5-phosphoribose 1-diphosphate to form N'-(5'-phosphoribosyl)-ATP (PR-ATP). Has a crucial role in the pathway because the rate of histidine biosynthesis seems to be controlled primarily by regulation of HisG enzymatic activity. This chain is ATP phosphoribosyltransferase, found in Leptospira interrogans serogroup Icterohaemorrhagiae serovar copenhageni (strain Fiocruz L1-130).